Reading from the N-terminus, the 98-residue chain is Small ribosomal subunit protein uS19 (98 aa).

Residues Thr-77–Lys-98 are disordered.

This sequence belongs to the universal ribosomal protein uS19 family.

Its function is as follows. Protein S19 forms a complex with S13 that binds strongly to the 16S ribosomal RNA. This Chlorobium phaeobacteroides (strain DSM 266 / SMG 266 / 2430) protein is Small ribosomal subunit protein uS19.